Reading from the N-terminus, the 126-residue chain is Holo-[acyl-carrier-protein] synthase (126 aa).

Residues D9 and E58 each coordinate Mg(2+).

Belongs to the P-Pant transferase superfamily. AcpS family. Requires Mg(2+) as cofactor.

The protein resides in the cytoplasm. The catalysed reaction is apo-[ACP] + CoA = holo-[ACP] + adenosine 3',5'-bisphosphate + H(+). Its function is as follows. Transfers the 4'-phosphopantetheine moiety from coenzyme A to a Ser of acyl-carrier-protein. This is Holo-[acyl-carrier-protein] synthase from Serratia proteamaculans (strain 568).